The primary structure comprises 250 residues: MARELKEVQGIIFKRQKYKEADLLAKIMTKQDGIITLIVKGALRPKSQLSAATLNFSMGTYVIYTSGHGLSNLRTYKEVKQFDGLYRDLTKNAYTSFIFDLIDHAFVEYQPLGKYYDLAVFALKKIDAGVDNEMITQIVQMKMLSAFGVEPELRHCVICGKERGVFDYSIKLGGIVCSDHFAKVNSRLHLTPKQTAVLRTIGLLPIERLGNIELNSETKKATRKAIDRIYRETIDLNLKTKKFLDEIKLF.

It belongs to the RecO family.

Its function is as follows. Involved in DNA repair and RecF pathway recombination. The polypeptide is DNA repair protein RecO (Lactobacillus helveticus (strain DPC 4571)).